The chain runs to 544 residues: Chaperonin GroEL (544 aa).

ATP is bound by residues 30 to 33, 87 to 91, G414, 478 to 480, and D494; these read TLGP, DGTTT, and NAL.

It belongs to the chaperonin (HSP60) family. As to quaternary structure, forms a cylinder of 14 subunits composed of two heptameric rings stacked back-to-back. Interacts with the co-chaperonin GroES.

The protein localises to the cytoplasm. The enzyme catalyses ATP + H2O + a folded polypeptide = ADP + phosphate + an unfolded polypeptide.. In terms of biological role, together with its co-chaperonin GroES, plays an essential role in assisting protein folding. The GroEL-GroES system forms a nano-cage that allows encapsulation of the non-native substrate proteins and provides a physical environment optimized to promote and accelerate protein folding. The protein is Chaperonin GroEL of Pelotomaculum thermopropionicum (strain DSM 13744 / JCM 10971 / SI).